We begin with the raw amino-acid sequence, 339 residues long: Ketol-acid reductoisomerase (NADP(+)) (339 aa).

The KARI N-terminal Rossmann domain occupies 1–182 (MRVYYDRDAD…GGGRSGVIET (182 aa)). NADP(+) contacts are provided by residues 24-27 (YGSQ), Arg48, Ser51, Thr53, and 83-86 (DELQ). His108 is an active-site residue. Gly134 serves as a coordination point for NADP(+). A KARI C-terminal knotted domain is found at 183–328 (TFKEECETDL…GKLRAMMPWI (146 aa)). 4 residues coordinate Mg(2+): Asp191, Glu195, Glu227, and Glu231. Substrate is bound at residue Ser252.

It belongs to the ketol-acid reductoisomerase family. Mg(2+) serves as cofactor.

The enzyme catalyses (2R)-2,3-dihydroxy-3-methylbutanoate + NADP(+) = (2S)-2-acetolactate + NADPH + H(+). It carries out the reaction (2R,3R)-2,3-dihydroxy-3-methylpentanoate + NADP(+) = (S)-2-ethyl-2-hydroxy-3-oxobutanoate + NADPH + H(+). It functions in the pathway amino-acid biosynthesis; L-isoleucine biosynthesis; L-isoleucine from 2-oxobutanoate: step 2/4. It participates in amino-acid biosynthesis; L-valine biosynthesis; L-valine from pyruvate: step 2/4. Functionally, involved in the biosynthesis of branched-chain amino acids (BCAA). Catalyzes an alkyl-migration followed by a ketol-acid reduction of (S)-2-acetolactate (S2AL) to yield (R)-2,3-dihydroxy-isovalerate. In the isomerase reaction, S2AL is rearranged via a Mg-dependent methyl migration to produce 3-hydroxy-3-methyl-2-ketobutyrate (HMKB). In the reductase reaction, this 2-ketoacid undergoes a metal-dependent reduction by NADPH to yield (R)-2,3-dihydroxy-isovalerate. The chain is Ketol-acid reductoisomerase (NADP(+)) from Brucella canis (strain ATCC 23365 / NCTC 10854 / RM-666).